An 850-amino-acid chain; its full sequence is RPA-related protein RADX (850 aa).

Positions 1–31 are disordered; it reads MSGESGQPQPGPSHAGLYLEHPERDQAGVPG. Positions 228-331 form a DNA-binding region, OB; it reads WNSRKNFPAL…LISTMEICLN (104 aa). Disordered regions lie at residues 575-612 and 632-671; these read EAFWNASRPSTSQAAGKEDHCHERGSKRSQDDRPMGSQ and GPSANPVPVPQPHSSAQMKGSKHNTPSQESSTAYTTGKSR. A compositionally biased stretch (basic and acidic residues) spans 590 to 608; it reads GKEDHCHERGSKRSQDDRP. A compositionally biased stretch (polar residues) spans 643–668; the sequence is PHSSAQMKGSKHNTPSQESSTAYTTG.

It is found in the chromosome. In terms of biological role, single-stranded DNA-binding protein recruited to replication forks to maintain genome stability. Prevents fork collapse by antagonizing the accumulation of RAD51 at forks to ensure the proper balance of fork remodeling and protection without interfering with the capacity of cells to complete homologous recombination of double-strand breaks. The protein is RPA-related protein RADX of Mus musculus (Mouse).